The chain runs to 360 residues: S-adenosylmethionine:tRNA ribosyltransferase-isomerase (360 aa).

Belongs to the QueA family. As to quaternary structure, monomer.

It is found in the cytoplasm. The enzyme catalyses 7-aminomethyl-7-carbaguanosine(34) in tRNA + S-adenosyl-L-methionine = epoxyqueuosine(34) in tRNA + adenine + L-methionine + 2 H(+). Its pathway is tRNA modification; tRNA-queuosine biosynthesis. In terms of biological role, transfers and isomerizes the ribose moiety from AdoMet to the 7-aminomethyl group of 7-deazaguanine (preQ1-tRNA) to give epoxyqueuosine (oQ-tRNA). This chain is S-adenosylmethionine:tRNA ribosyltransferase-isomerase, found in Burkholderia pseudomallei (strain K96243).